We begin with the raw amino-acid sequence, 118 residues long: Cell division protein FtsB (118 aa).

The Cytoplasmic segment spans residues 1-6; it reads MRNWRW. The helical transmembrane segment at 7 to 24 threads the bilayer; it reads LLLVLAALLSWLQHRFWF. Residues 25-118 are Periplasmic-facing; it reads GPGNSGEVRM…DLAQPRREKR (94 aa). A coiled-coil region spans residues 30 to 66; the sequence is GEVRMLQVQIVQQHQENERLRQRNASLAAEVKNLKDG. The segment at 97–118 is disordered; it reads PLPNDTSADHGVDLAQPRREKR. Basic and acidic residues predominate over residues 103 to 118; that stretch reads SADHGVDLAQPRREKR.

This sequence belongs to the FtsB family. Part of a complex composed of FtsB, FtsL and FtsQ.

It localises to the cell inner membrane. In terms of biological role, essential cell division protein. May link together the upstream cell division proteins, which are predominantly cytoplasmic, with the downstream cell division proteins, which are predominantly periplasmic. The chain is Cell division protein FtsB from Xylella fastidiosa (strain 9a5c).